The primary structure comprises 389 residues: Putative F-box protein At3g10240 (389 aa).

The tract at residues 1–26 is disordered; it reads MEQQEEKRKIKAYQRKSKRSKSGSSS. Positions 9-21 are enriched in basic residues; the sequence is KIKAYQRKSKRSK. The 46-residue stretch at 21–66 folds into the F-box domain; sequence KSGSSSIPLDLVSEILLRLPEKSVARFRCVSKPWSSITTEPYFINL.

This is Putative F-box protein At3g10240 from Arabidopsis thaliana (Mouse-ear cress).